The following is a 415-amino-acid chain: Secernin-2 (415 aa).

Cys8 is a catalytic residue.

It belongs to the peptidase C69 family. Secernin subfamily.

The sequence is that of Secernin-2 (scrn2) from Danio rerio (Zebrafish).